The sequence spans 578 residues: Proline--tRNA ligase (578 aa).

The protein belongs to the class-II aminoacyl-tRNA synthetase family. ProS type 1 subfamily. In terms of assembly, homodimer.

It is found in the cytoplasm. The catalysed reaction is tRNA(Pro) + L-proline + ATP = L-prolyl-tRNA(Pro) + AMP + diphosphate. Catalyzes the attachment of proline to tRNA(Pro) in a two-step reaction: proline is first activated by ATP to form Pro-AMP and then transferred to the acceptor end of tRNA(Pro). As ProRS can inadvertently accommodate and process non-cognate amino acids such as alanine and cysteine, to avoid such errors it has two additional distinct editing activities against alanine. One activity is designated as 'pretransfer' editing and involves the tRNA(Pro)-independent hydrolysis of activated Ala-AMP. The other activity is designated 'posttransfer' editing and involves deacylation of mischarged Ala-tRNA(Pro). The misacylated Cys-tRNA(Pro) is not edited by ProRS. This Burkholderia multivorans (strain ATCC 17616 / 249) protein is Proline--tRNA ligase.